Consider the following 134-residue polypeptide: uncharacterized protein (134 aa).

Belongs to the orthopoxviruses B21 protein family.

This is an uncharacterized protein from Bos taurus (Bovine).